A 90-amino-acid polypeptide reads, in one-letter code: MRKPELAAAIAEKADLTKEQANRVLNALLDEITGALNRKDSVTLVGFGTFLQRHRGARTGKNPQTGQPVKIKASNTVAFKPGKALRDAVN.

It belongs to the bacterial histone-like protein family. As to quaternary structure, heterodimer of an alpha and a beta chain.

Functionally, histone-like DNA-binding protein which is capable of wrapping DNA to stabilize it, and thus to prevent its denaturation under extreme environmental conditions. The polypeptide is DNA-binding protein HU-alpha (hupA) (Pseudomonas aeruginosa (strain ATCC 15692 / DSM 22644 / CIP 104116 / JCM 14847 / LMG 12228 / 1C / PRS 101 / PAO1)).